The sequence spans 133 residues: T-cell receptor beta chain V region 86T1 (133 aa).

Positions Met-1–Thr-21 are cleaved as a signal peptide. A v segment region spans residues Lys-22–His-113. Residues Asn-36 and Asn-75 are each glycosylated (N-linked (GlcNAc...) asparagine). A disulfide bridge connects residues Cys-41 and Cys-109. The interval Gly-114–Val-133 is j segment.

This chain is T-cell receptor beta chain V region 86T1, found in Mus musculus (Mouse).